A 100-amino-acid polypeptide reads, in one-letter code: Large ribosomal subunit protein uL23 (100 aa).

This sequence belongs to the universal ribosomal protein uL23 family. As to quaternary structure, part of the 50S ribosomal subunit. Contacts protein L29, and trigger factor when it is bound to the ribosome.

One of the early assembly proteins it binds 23S rRNA. One of the proteins that surrounds the polypeptide exit tunnel on the outside of the ribosome. Forms the main docking site for trigger factor binding to the ribosome. The polypeptide is Large ribosomal subunit protein uL23 (Buchnera aphidicola subsp. Schizaphis graminum (strain Sg)).